Here is a 570-residue protein sequence, read N- to C-terminus: Serine/threonine-protein kinase flr-4 (570 aa).

Positions 40-331 constitute a Protein kinase domain; sequence YKYIQDLGKG…KLRIQIKKIL (292 aa). Residues 46 to 54 and Lys67 contribute to the ATP site; that span reads LGKGRFGTV. The Proton acceptor role is filled by Asp172. Residues 338–369 form a disordered region; that stretch reads EEETDISHPISNSNTDSSTAISHNHSNDRKVG. Residues 346–361 show a composition bias toward polar residues; sequence PISNSNTDSSTAISHN. 3 helical membrane passes run 400–420, 425–445, and 471–491; these read IMQIFVASGYYLSRILYFLNI, ICYLLLFLSLGITALGSFLLI, and LIISGILIVLMFALLFSCCMV. Residues 550–570 are disordered; that stretch reads VRRNHDDYYYDESSGPANEEN.

This sequence belongs to the protein kinase superfamily. Ser/Thr protein kinase family. In terms of tissue distribution, present in the intestinal cells from comma-stage embryos through the adult stage, although the intestinal expression is weaker after the L1 stage. Accumulates at the cell membrane of intestinal cells, especially the lateral membrane intervening the intestinal cells. Also detected in the muscles of the pharyngeal isthmus from the 3-fold embryonic stage, and in a pair of head neurons, which correspond to the AUA neurons, from the late L1 stage (at protein level).

The protein resides in the membrane. The enzyme catalyses L-seryl-[protein] + ATP = O-phospho-L-seryl-[protein] + ADP + H(+). It catalyses the reaction L-threonyl-[protein] + ATP = O-phospho-L-threonyl-[protein] + ADP + H(+). Probable serine-threonine protein kinase involved in the control of defecation rhythms. Required to increase the length of defecation cycle period. Acts in a cell-functional rather than developmental aspect in the regulation of defecation rhythms. Prevents preferential activation of the p38 MAPK pathway in response to the levels of vitamin B12 in different food types during larval development, thereby regulating the expression of cytoprotective genes, modulating life span and stress tolerance. The protein is Serine/threonine-protein kinase flr-4 (flr-4) of Caenorhabditis elegans.